Here is a 371-residue protein sequence, read N- to C-terminus: MPHHYILTLFGLLPVATNISTWWNFGSMLLTCLALQVLTGFFLAVHYTANINLAFSSIIHITRDVPYGWMMQNLHAIGASMFFICIYIHIARGLYYGSYLNKETWMSGITLLITLMATAFFGYVLPWGQMSFWAATVITNLLTAVPYLGTSLTTWLWGGFAINDPTLTRFFALHFILPFEIISLSSLHIILLHEEGSSNPLGTNPDIDKIPFHPYHSHKDLLLLTLMILLLFITMSFFPDIFNDPDNFSKANPLVTPQHIKPEWYFLFAYGILRSIPNKLGGALALVTSIMILFTIPFTHTAHLRPMTFRPLSQLMFWTLVSTFITITWAATKPVEPPFIIISQATSLLYFTFFLSFPILGWTENKMMNTP.

4 helical membrane-spanning segments follow: residues 25–45 (FGSMLLTCLALQVLTGFFLAV), 69–90 (WMMQNLHAIGASMFFICIYIHI), 105–125 (WMSGITLLITLMATAFFGYVL), and 170–190 (FFALHFILPFEIISLSSLHII). Histidine 75 and histidine 89 together coordinate heme b. Histidine 174 and histidine 188 together coordinate heme b. Histidine 193 is an a ubiquinone binding site. Transmembrane regions (helical) follow at residues 218-238 (HKDLLLLTLMILLLFITMSFF), 280-300 (LGGALALVTSIMILFTIPFTH), 312-332 (LSQLMFWTLVSTFITITWAAT), and 339-358 (FIIISQATSLLYFTFFLSFP).

It belongs to the cytochrome b family. The cytochrome bc1 complex contains 3 respiratory subunits (MT-CYB, CYC1 and UQCRFS1), 2 core proteins (UQCRC1 and UQCRC2) and probably 6 low-molecular weight proteins. The cofactor is heme b.

It is found in the mitochondrion inner membrane. In terms of biological role, component of the ubiquinol-cytochrome c reductase complex (complex III or cytochrome b-c1 complex) that is part of the mitochondrial respiratory chain. The b-c1 complex mediates electron transfer from ubiquinol to cytochrome c. Contributes to the generation of a proton gradient across the mitochondrial membrane that is then used for ATP synthesis. In Apodora papuana (Papuan olive python), this protein is Cytochrome b (MT-CYB).